A 326-amino-acid chain; its full sequence is MKILGIESSCDETAASVVEDGVNILSNRISSQIDIHSRYGGVVPEVASRQHLLSILPVIKDALEEARTGLDEISAIAITNGPGLAGSLIVGVNAAKAIAAARRIPLVAVNHLHGHIYANWLFGKIPEFPCLCLTVSGGHTDLVLMSGHGQYQLLGRTRDDAAGEAFDKAARILGLSYPGGPAIDRASQDGQAVLDLPRSWIPGSHDFSFSGLKTALLRLVESGEVCSVNDAAASFQKAVVDVLVTKTINCAQEYNVKQILLAGGVAANNLLRKQLSEKSSLPVSIPPMGLCTDNAAVIASCGYFRFISGKQDGLDMDVLPALSVTS.

2 residues coordinate Fe cation: histidine 111 and histidine 115. Substrate-binding positions include 134–138, aspartate 167, glycine 180, aspartate 184, and asparagine 268; that span reads TVSGG. Aspartate 293 contacts Fe cation.

Belongs to the KAE1 / TsaD family. It depends on Fe(2+) as a cofactor.

It is found in the cytoplasm. It catalyses the reaction L-threonylcarbamoyladenylate + adenosine(37) in tRNA = N(6)-L-threonylcarbamoyladenosine(37) in tRNA + AMP + H(+). Functionally, required for the formation of a threonylcarbamoyl group on adenosine at position 37 (t(6)A37) in tRNAs that read codons beginning with adenine. Is involved in the transfer of the threonylcarbamoyl moiety of threonylcarbamoyl-AMP (TC-AMP) to the N6 group of A37, together with TsaE and TsaB. TsaD likely plays a direct catalytic role in this reaction. This is tRNA N6-adenosine threonylcarbamoyltransferase from Dehalococcoides mccartyi (strain ATCC BAA-2100 / JCM 16839 / KCTC 5957 / BAV1).